The sequence spans 762 residues: Polyribonucleotide nucleotidyltransferase (762 aa).

The Mg(2+) site is built by Asp-531 and Asp-537. The KH domain occupies 597-656; that stretch reads PRVTTIKVPVDKIGEVIGPKGKVINSITEETRAQISIEDDGTVFVGATDGPSAQAAIDKI. In terms of domain architecture, S1 motif spans 668–737; it reads GERFLGTVVK…KRGKISLVLV (70 aa).

This sequence belongs to the polyribonucleotide nucleotidyltransferase family. It depends on Mg(2+) as a cofactor.

The protein resides in the cytoplasm. It carries out the reaction RNA(n+1) + phosphate = RNA(n) + a ribonucleoside 5'-diphosphate. Its function is as follows. Involved in mRNA degradation. Catalyzes the phosphorolysis of single-stranded polyribonucleotides processively in the 3'- to 5'-direction. The chain is Polyribonucleotide nucleotidyltransferase from Mycobacterium ulcerans (strain Agy99).